The chain runs to 591 residues: Serine/threonine-protein phosphatase PP2A 65 kDa regulatory subunit (591 aa).

Ala-2 carries the post-translational modification N-acetylalanine. HEAT repeat units lie at residues 10–48 (DSLY…GEER), 49–86 (TRSE…GGPE), 87–125 (FAMY…SAQD), 126–163 (LEIH…VTQP), 164–202 (VKAE…ETEY), 203–241 (LKSD…PQDD), 242–280 (VEHL…GPEI), 281–323 (TRVD…QVQI), 324–362 (ILSS…GAYQ), 363–401 (TVEQ…GIQQ), 402–440 (LSQS…GQEF), 441–479 (FDQK…GAPW), 480–518 (AEQA…GTDI), 519–557 (TTKL…EASV), and 558–591 (IDAQ…IAAA).

It belongs to the phosphatase 2A regulatory subunit A family. In terms of assembly, PP2A exists in several trimeric forms, all of which consist of a core composed of a catalytic subunit associated with a 65 kDa regulatory subunit (PR65) (subunit A). The core complex associates with a third, variable subunit (subunit B), which confers distinct properties to the holoenzyme. Interacts with the inorganic phosphate transporter PXo (CG10483). Component of the Integrator-PP2A (INTAC) complex, composed of the Integrator core complex and protein phosphatase 2A subunits mts/PP2A and Pp2A-29B. In terms of tissue distribution, expression varies in tissues throughout development. Highly distributed expression in early embryos. In late embryonal development, found at high levels in nervous system and gonads. In third instar larvae, found in brain, imaginal disks and salivary glands.

The protein localises to the nucleus. Its function is as follows. The PR65 subunit of protein phosphatase 2A serves as a scaffolding molecule to coordinate the assembly of the catalytic subunit and a variable regulatory B subunit. Key mediator of a quality checkpoint during transcription elongation as part of the Integrator-PP2A (INTAC) complex. The INTAC complex drives premature transcription termination of transcripts that are unfavorably configured for transcriptional elongation: within the INTAC complex, acts as a scaffolding subunit for mts/PP2A, which catalyzes dephosphorylation of the C-terminal domain (CTD) of Pol II subunit POLR2A/RPB1 and Spt5, thereby preventing transcriptional elongation. This chain is Serine/threonine-protein phosphatase PP2A 65 kDa regulatory subunit (Pp2A-29B), found in Drosophila melanogaster (Fruit fly).